Consider the following 88-residue polypeptide: RNA-binding protein Hfq (88 aa).

Positions 9–68 (DPFLNALRCERIPVSIYLVNGIKLQGQIESFDQFVILLKNTVNQMVYKHAISTVVPARAV) constitute a Sm domain. The segment at 66–88 (RAVSHHTASDRPQGERPQETTEE) is disordered. Positions 72–88 (TASDRPQGERPQETTEE) are enriched in basic and acidic residues.

Belongs to the Hfq family. Homohexamer.

Functionally, RNA chaperone that binds small regulatory RNA (sRNAs) and mRNAs to facilitate mRNA translational regulation in response to envelope stress, environmental stress and changes in metabolite concentrations. Also binds with high specificity to tRNAs. The chain is RNA-binding protein Hfq from Aliivibrio salmonicida (strain LFI1238) (Vibrio salmonicida (strain LFI1238)).